Reading from the N-terminus, the 132-residue chain is L-ectoine synthase (132 aa).

The protein belongs to the ectoine synthase family.

It catalyses the reaction (2S)-4-acetamido-2-aminobutanoate = L-ectoine + H2O. Its pathway is amine and polyamine biosynthesis; ectoine biosynthesis; L-ectoine from L-aspartate 4-semialdehyde: step 3/3. In terms of biological role, catalyzes the circularization of gamma-N-acetyl-alpha,gamma-diaminobutyric acid (ADABA) to ectoine (1,4,5,6-tetrahydro-2-methyl-4-pyrimidine carboxylic acid), which is an excellent osmoprotectant. The protein is L-ectoine synthase of Saccharophagus degradans (strain 2-40 / ATCC 43961 / DSM 17024).